Consider the following 762-residue polypeptide: MALAHSLGFPRIGRDRELKKAQEAFWKGELDEAGLRAVGRDLRKTHWELQKNAGIDLLPVGDFAWYDQVLTHSLMFGVIPRRFRPQHGPATLQTLFGMARGVSDGCCGGAHAQEMTKWFDTNYHYLVPEFGADQQFQLGWEQLFEEVEEARALGHAVKPVLIGPLTYLWLGKAKGAEFDKLELLDRLLPLYGQIFQRLAAQGVEWVQIDEPILVLDLPQDWKNAFERAYNQIQREPLKKLLATYFGGLEENLGLAANLPVDGLHIDLVRAPEQYPTILDRLPAYKVLSLGLVNGRNVWRCDLEKALATLQHAHERLGERLWVAPSCSLLHSPVDLDREDQLDAELKSWLAFAVQKCQEVAVLAQAVNQPQARAVLKALEQSRAVQASRAASPRIHKPAVQARVAAITTKDSQRRSAFTQRIAKQRAGLDLPLFPTTTIGSFPQTASIRLARQSFKQGKLSVAEYTEAMHSEIRHAVLVQERLGLDVLVHGEAERNDMVEYFAEQLDGYVFTRFGWVQSYGSRCVKPALIFGDLSRPNAMTVEWIRYAQGLTDKVMKGMLTGPVTMLMWSFPREDVSREVQARQLALAIRDEVLDLEAAGIRIVQIDEAAFREGLPLRRAQWQHYLDWATEVFRLCASGVRDETQIHTHMCYSEFNDVIESIAAMDADVITIETSRSDMELLDAFKAFAYPNEIGPGVYDIHSPRVPDASEMANLLRKAAQRIPAERLWVNPDCGLKTRGWPETEAALVHMVTAARQLRKELA.

Residues 16 to 19 (RELK) and Lys-117 contribute to the 5-methyltetrahydropteroyltri-L-glutamate site. L-homocysteine is bound by residues 438–440 (IGS) and Glu-491. Residues 438–440 (IGS) and Glu-491 contribute to the L-methionine site. Residues 522–523 (RC) and Trp-568 contribute to the 5-methyltetrahydropteroyltri-L-glutamate site. Asp-606 serves as a coordination point for L-homocysteine. Asp-606 contacts L-methionine. Glu-612 provides a ligand contact to 5-methyltetrahydropteroyltri-L-glutamate. His-648, Cys-650, and Glu-672 together coordinate Zn(2+). The active-site Proton donor is His-701. Position 733 (Cys-733) interacts with Zn(2+).

This sequence belongs to the vitamin-B12 independent methionine synthase family. It depends on Zn(2+) as a cofactor.

The catalysed reaction is 5-methyltetrahydropteroyltri-L-glutamate + L-homocysteine = tetrahydropteroyltri-L-glutamate + L-methionine. Its pathway is amino-acid biosynthesis; L-methionine biosynthesis via de novo pathway; L-methionine from L-homocysteine (MetE route): step 1/1. Functionally, catalyzes the transfer of a methyl group from 5-methyltetrahydrofolate to homocysteine resulting in methionine formation. This is 5-methyltetrahydropteroyltriglutamate--homocysteine methyltransferase from Pseudomonas fluorescens (strain ATCC BAA-477 / NRRL B-23932 / Pf-5).